The primary structure comprises 153 residues: Deoxyuridine 5'-triphosphate nucleotidohydrolase (153 aa).

Substrate contacts are provided by residues 71–73, Asn84, 88–90, and Lys98; these read RSG and TID.

The protein belongs to the dUTPase family. Requires Mg(2+) as cofactor.

The enzyme catalyses dUTP + H2O = dUMP + diphosphate + H(+). The protein operates within pyrimidine metabolism; dUMP biosynthesis; dUMP from dCTP (dUTP route): step 2/2. In terms of biological role, this enzyme is involved in nucleotide metabolism: it produces dUMP, the immediate precursor of thymidine nucleotides and it decreases the intracellular concentration of dUTP so that uracil cannot be incorporated into DNA. The polypeptide is Deoxyuridine 5'-triphosphate nucleotidohydrolase (Wolbachia pipientis wMel).